A 175-amino-acid chain; its full sequence is Nucleoside-triphosphatase THEP1 (175 aa).

ATP contacts are provided by residues 15–22 and 106–113; these read GNPGVGKT and VLAIDEIG.

The protein belongs to the THEP1 NTPase family.

It catalyses the reaction a ribonucleoside 5'-triphosphate + H2O = a ribonucleoside 5'-diphosphate + phosphate + H(+). Functionally, has nucleotide phosphatase activity towards ATP, GTP, CTP, TTP and UTP. May hydrolyze nucleoside diphosphates with lower efficiency. This is Nucleoside-triphosphatase THEP1 from Saccharolobus solfataricus (strain ATCC 35092 / DSM 1617 / JCM 11322 / P2) (Sulfolobus solfataricus).